Consider the following 73-residue polypeptide: uncharacterized protein (73 aa).

The N-terminal stretch at 1 to 30 (MVDFYFIEEKVAYRAAFTTTGKIAATLGLA) is a signal peptide.

This is an uncharacterized protein from Archaeoglobus fulgidus (strain ATCC 49558 / DSM 4304 / JCM 9628 / NBRC 100126 / VC-16).